Here is a 302-residue protein sequence, read N- to C-terminus: Acetylglutamate kinase (302 aa).

Substrate is bound by residues 68 to 69 (GG), R90, and N194.

Belongs to the acetylglutamate kinase family. ArgB subfamily.

Its subcellular location is the cytoplasm. The catalysed reaction is N-acetyl-L-glutamate + ATP = N-acetyl-L-glutamyl 5-phosphate + ADP. Its pathway is amino-acid biosynthesis; L-arginine biosynthesis; N(2)-acetyl-L-ornithine from L-glutamate: step 2/4. In terms of biological role, catalyzes the ATP-dependent phosphorylation of N-acetyl-L-glutamate. The protein is Acetylglutamate kinase of Acinetobacter baumannii (strain AB307-0294).